The sequence spans 1005 residues: Sorbin and SH3 domain-containing protein 1 homolog (1005 aa).

Disordered stretches follow at residues 1–31, 61–86, 99–153, 243–292, 386–409, 427–475, and 542–622; these read MMHH…PAAD, LDMK…STPS, YVDP…PHSA, NELK…FNSE, FEEK…FKND, TTKN…TAAA, and MHRK…SNEE. Polar residues predominate over residues 11-25; that stretch reads NLANSSEPQQPSGQY. Residues 260–269 show a composition bias toward polar residues; the sequence is VMTSSTENLK. The span at 270–279 shows a compositional bias: low complexity; that stretch reads NGNNQQNQQP. Over residues 392 to 409 the composition is skewed to polar residues; it reads RSPMTSTPSYKEQGFKND. A compositionally biased stretch (low complexity) spans 448–475; it reads SDTYPVSSSTTSTWPSHTTTPTTTTAAA. The region spanning 499 to 567 is the SoHo domain; the sequence is VMSTNMDEPI…FINPSNVTDG (69 aa). Basic and acidic residues predominate over residues 544–557; that stretch reads RKGEDGSNEGKEQH. Positions 559 to 589 are enriched in polar residues; it reads INPSNVTDGIGRTTPTASNLGRSRENLSFNQ. A coiled-coil region spans residues 610-642; the sequence is YNNQERVKQSNEEELLRLKAEKLAEELRKEKER. SH3 domains follow at residues 683–742, 745–805, and 946–1005; these read QPVM…INTG, GDSQ…PIEQ, and KGSE…VKRH.

As to quaternary structure, may interact with deb-1. In terms of tissue distribution, expressed in body wall muscles, muscle arm attachment sites at the nerve ring, all non-striated muscles, and distal tip cells of the gonad. Highly expressed in the origins and insertions of the vulval and anal depressor muscles and the spicule-associated and diagonal muscles of the male tail. Expressed in small puncta throughout the uterus, stomatointestinal muscle and proximal gonadal sheath tissues. Not expressed in the pharynx.

The protein resides in the cell junction. It localises to the adherens junction. It is found in the cell membrane. Its subcellular location is the focal adhesion. In terms of biological role, required for organization of sarcomeres in body wall muscles and for maintaining normal mitochondrial position in myocytes. The polypeptide is Sorbin and SH3 domain-containing protein 1 homolog (Caenorhabditis elegans).